A 46-amino-acid polypeptide reads, in one-letter code: GIFSKLAGKKLKNLLISGLKSVGKEVGMDVVRTGIDIAGCKIKGEC.

Residues Cys-40 and Cys-46 are joined by a disulfide bond.

Expressed by the skin glands.

Its subcellular location is the secreted. Its function is as follows. Shows antibacterial activity against representative Gram-negative and Gram-positive bacterial species, and hemolytic activity. The chain is Esculentin-1R from Pelophylax ridibundus (Marsh frog).